A 227-amino-acid polypeptide reads, in one-letter code: UPF0688 protein C1orf174 homolog (227 aa).

Disordered stretches follow at residues 1-122 and 207-227; these read MRKR…VSDL and AKEE…EGNI. The segment covering 47-63 has biased composition (basic and acidic residues); it reads TEKESSKKLRKDEKGPV. Composition is skewed to polar residues over residues 77–104 and 113–122; these read AASN…NGTR and RLPSSPVSDL.

Belongs to the UPF0688 family.

It is found in the nucleus. This chain is UPF0688 protein C1orf174 homolog, found in Xenopus tropicalis (Western clawed frog).